The chain runs to 260 residues: 3'-5' ssDNA/RNA exonuclease TatD (260 aa).

Residues glutamate 92, histidine 128, and histidine 153 each contribute to the a divalent metal cation site.

Belongs to the metallo-dependent hydrolases superfamily. TatD-type hydrolase family. TatD subfamily. In terms of assembly, monomer. It depends on Mg(2+) as a cofactor.

It localises to the cytoplasm. 3'-5' exonuclease that prefers single-stranded DNA and RNA. May play a role in the H(2)O(2)-induced DNA damage repair. The polypeptide is 3'-5' ssDNA/RNA exonuclease TatD (Pectobacterium carotovorum subsp. carotovorum (strain PC1)).